Reading from the N-terminus, the 197-residue chain is Probable GTP-binding protein EngB (197 aa).

The EngB-type G domain maps to 22–195 (GYPEIALVGR…WNWIEAQAFG (174 aa)). GTP is bound by residues 30 to 37 (GRSNVGKS), 57 to 61 (GKTQT), 75 to 78 (DVPG), 142 to 145 (TKSD), and 174 to 176 (FSA). S37 and T59 together coordinate Mg(2+).

It belongs to the TRAFAC class TrmE-Era-EngA-EngB-Septin-like GTPase superfamily. EngB GTPase family. Mg(2+) is required as a cofactor.

Functionally, necessary for normal cell division and for the maintenance of normal septation. This chain is Probable GTP-binding protein EngB, found in Levilactobacillus brevis (strain ATCC 367 / BCRC 12310 / CIP 105137 / JCM 1170 / LMG 11437 / NCIMB 947 / NCTC 947) (Lactobacillus brevis).